A 424-amino-acid polypeptide reads, in one-letter code: Glutamyl-tRNA reductase (424 aa).

Substrate is bound by residues 53–56, serine 111, 116–118, and glutamine 122; these read TCNR and EPQ. The active-site Nucleophile is cysteine 54. 191 to 196 is a binding site for NADP(+); the sequence is GAGEMI.

It belongs to the glutamyl-tRNA reductase family. Homodimer.

The enzyme catalyses (S)-4-amino-5-oxopentanoate + tRNA(Glu) + NADP(+) = L-glutamyl-tRNA(Glu) + NADPH + H(+). Its pathway is porphyrin-containing compound metabolism; protoporphyrin-IX biosynthesis; 5-aminolevulinate from L-glutamyl-tRNA(Glu): step 1/2. Catalyzes the NADPH-dependent reduction of glutamyl-tRNA(Glu) to glutamate 1-semialdehyde (GSA). The chain is Glutamyl-tRNA reductase from Bordetella bronchiseptica (strain ATCC BAA-588 / NCTC 13252 / RB50) (Alcaligenes bronchisepticus).